A 216-amino-acid chain; its full sequence is Pyrophosphatase PpaX (216 aa).

The active-site Nucleophile is the D9.

It belongs to the HAD-like hydrolase superfamily. PpaX family. It depends on Mg(2+) as a cofactor.

The enzyme catalyses diphosphate + H2O = 2 phosphate + H(+). Functionally, hydrolyzes pyrophosphate formed during P-Ser-HPr dephosphorylation by HPrK/P. Might play a role in controlling the intracellular pyrophosphate pool. The sequence is that of Pyrophosphatase PpaX from Bacillus anthracis (strain A0248).